The sequence spans 689 residues: Glycine--tRNA ligase beta subunit (689 aa).

Belongs to the class-II aminoacyl-tRNA synthetase family. Tetramer of two alpha and two beta subunits.

Its subcellular location is the cytoplasm. It carries out the reaction tRNA(Gly) + glycine + ATP = glycyl-tRNA(Gly) + AMP + diphosphate. This is Glycine--tRNA ligase beta subunit from Coxiella burnetii (strain RSA 331 / Henzerling II).